The sequence spans 355 residues: Ribosomal RNA large subunit methyltransferase M (355 aa).

S-adenosyl-L-methionine-binding positions include serine 191, 224-227, aspartate 243, aspartate 263, and aspartate 279; that span reads APGG. The active-site Proton acceptor is the lysine 308.

This sequence belongs to the class I-like SAM-binding methyltransferase superfamily. RNA methyltransferase RlmE family. RlmM subfamily. Monomer.

The protein resides in the cytoplasm. The catalysed reaction is cytidine(2498) in 23S rRNA + S-adenosyl-L-methionine = 2'-O-methylcytidine(2498) in 23S rRNA + S-adenosyl-L-homocysteine + H(+). Its function is as follows. Catalyzes the 2'-O-methylation at nucleotide C2498 in 23S rRNA. This chain is Ribosomal RNA large subunit methyltransferase M, found in Stenotrophomonas maltophilia (strain K279a).